Consider the following 277-residue polypeptide: Large ribosomal subunit protein uL2 (277 aa).

The interval P218–K277 is disordered.

This sequence belongs to the universal ribosomal protein uL2 family. As to quaternary structure, part of the 50S ribosomal subunit. Forms a bridge to the 30S subunit in the 70S ribosome.

One of the primary rRNA binding proteins. Required for association of the 30S and 50S subunits to form the 70S ribosome, for tRNA binding and peptide bond formation. It has been suggested to have peptidyltransferase activity; this is somewhat controversial. Makes several contacts with the 16S rRNA in the 70S ribosome. This is Large ribosomal subunit protein uL2 from Clostridium novyi (strain NT).